The chain runs to 192 residues: Pyruvate kinase (192 aa).

Arg41 lines the substrate pocket. Asn43, Ser45, Asp75, and Thr76 together coordinate K(+). 43 to 46 (NFSH) is an ATP binding site.

This sequence belongs to the pyruvate kinase family. Requires Mg(2+) as cofactor. K(+) is required as a cofactor.

The enzyme catalyses pyruvate + ATP = phosphoenolpyruvate + ADP + H(+). It functions in the pathway carbohydrate degradation; glycolysis; pyruvate from D-glyceraldehyde 3-phosphate: step 5/5. The chain is Pyruvate kinase (pyk) from Spiroplasma citri.